A 482-amino-acid polypeptide reads, in one-letter code: UDP-N-acetylmuramoyl-L-alanyl-D-glutamate--2,6-diaminopimelate ligase 1 (482 aa).

Position 30 (Ser30) interacts with UDP-N-acetyl-alpha-D-muramoyl-L-alanyl-D-glutamate. Residue 110 to 116 (GTNGKTT) coordinates ATP. Residues 152–153 (TT), Ser179, and Arg187 each bind UDP-N-acetyl-alpha-D-muramoyl-L-alanyl-D-glutamate. Lys219 bears the N6-carboxylysine mark. Meso-2,6-diaminopimelate is bound by residues Arg378, 402 to 405 (DNPR), Gly452, and Glu456. Residues 402–405 (DNPR) carry the Meso-diaminopimelate recognition motif motif.

It belongs to the MurCDEF family. MurE subfamily. The cofactor is Mg(2+). Carboxylation is probably crucial for Mg(2+) binding and, consequently, for the gamma-phosphate positioning of ATP.

It is found in the cytoplasm. The catalysed reaction is UDP-N-acetyl-alpha-D-muramoyl-L-alanyl-D-glutamate + meso-2,6-diaminopimelate + ATP = UDP-N-acetyl-alpha-D-muramoyl-L-alanyl-gamma-D-glutamyl-meso-2,6-diaminopimelate + ADP + phosphate + H(+). Its pathway is cell wall biogenesis; peptidoglycan biosynthesis. Catalyzes the addition of meso-diaminopimelic acid to the nucleotide precursor UDP-N-acetylmuramoyl-L-alanyl-D-glutamate (UMAG) in the biosynthesis of bacterial cell-wall peptidoglycan. This chain is UDP-N-acetylmuramoyl-L-alanyl-D-glutamate--2,6-diaminopimelate ligase 1, found in Clostridium acetobutylicum (strain ATCC 824 / DSM 792 / JCM 1419 / IAM 19013 / LMG 5710 / NBRC 13948 / NRRL B-527 / VKM B-1787 / 2291 / W).